We begin with the raw amino-acid sequence, 144 residues long: NADH-ubiquinone oxidoreductase chain 6 (144 aa).

5 consecutive transmembrane segments (helical) span residues 1–21, 26–46, 47–67, 76–96, and 108–128; these read MLGSFFFLAIISCVMSYINVD, SFFLIFSLLMVMPLISFFLHV, WFSYFICLLFLSGIFVILVYF, VVTPFYFVGGVLSVFFFYPFF, and FYFSVYWMLLVWVIFVLIFFM.

It belongs to the complex I subunit 6 family.

It localises to the mitochondrion membrane. It carries out the reaction a ubiquinone + NADH + 5 H(+)(in) = a ubiquinol + NAD(+) + 4 H(+)(out). Functionally, core subunit of the mitochondrial membrane respiratory chain NADH dehydrogenase (Complex I) that is believed to belong to the minimal assembly required for catalysis. Complex I functions in the transfer of electrons from NADH to the respiratory chain. The immediate electron acceptor for the enzyme is believed to be ubiquinone. In Ascaris suum (Pig roundworm), this protein is NADH-ubiquinone oxidoreductase chain 6 (ND6).